The sequence spans 331 residues: Ferredoxin--NADP reductase 2 (331 aa).

Residues Glu37, Gln45, Tyr50, Val90, Phe124, Asp286, and Thr327 each contribute to the FAD site.

The protein belongs to the ferredoxin--NADP reductase type 2 family. As to quaternary structure, homodimer. Requires FAD as cofactor.

The catalysed reaction is 2 reduced [2Fe-2S]-[ferredoxin] + NADP(+) + H(+) = 2 oxidized [2Fe-2S]-[ferredoxin] + NADPH. The polypeptide is Ferredoxin--NADP reductase 2 (Listeria innocua serovar 6a (strain ATCC BAA-680 / CLIP 11262)).